Here is a 392-residue protein sequence, read N- to C-terminus: Heat-inducible transcription repressor HrcA (392 aa).

Belongs to the HrcA family.

Negative regulator of class I heat shock genes (grpE-dnaK-dnaJ and groELS operons). Prevents heat-shock induction of these operons. The chain is Heat-inducible transcription repressor HrcA from Chlamydia trachomatis serovar D (strain ATCC VR-885 / DSM 19411 / UW-3/Cx).